A 420-amino-acid chain; its full sequence is Bile acid-CoA:amino acid N-acyltransferase (420 aa).

The residue at position 40 (K40) is an N6-succinyllysine. Residue S125 is modified to Phosphoserine. Residues C235 and D328 each act as charge relay system in the active site. N6-succinyllysine is present on residues K346 and K350. H362 acts as the Charge relay system in catalysis. N6-succinyllysine is present on K409. S418 is subject to Phosphoserine.

This sequence belongs to the C/M/P thioester hydrolase family. In terms of assembly, monomer. As to expression, highly expressed in liver, kidney, gallbladder, proximal intestine and distal intestine. Weakly expressed in adrenal gland, lung, brain and muscle.

It localises to the cytoplasm. The protein localises to the cytosol. It is found in the peroxisome. The enzyme catalyses choloyl-CoA + glycine = glycocholate + CoA + H(+). It carries out the reaction hexadecanoyl-CoA + H2O = hexadecanoate + CoA + H(+). It catalyses the reaction choloyl-CoA + H2O = cholate + CoA + H(+). The catalysed reaction is chenodeoxycholoyl-CoA + H2O = chenodeoxycholate + CoA + H(+). The enzyme catalyses eicosanoyl-CoA + H2O = eicosanoate + CoA + H(+). It carries out the reaction octadecanoyl-CoA + H2O = octadecanoate + CoA + H(+). It catalyses the reaction docosanoyl-CoA + H2O = docosanoate + CoA + H(+). The catalysed reaction is tetracosanoyl-CoA + H2O = tetracosanoate + CoA + H(+). The enzyme catalyses hexacosanoyl-CoA + H2O = hexacosanoate + CoA + H(+). It carries out the reaction dodecanoyl-CoA + H2O = dodecanoate + CoA + H(+). It catalyses the reaction tetradecanoyl-CoA + H2O = tetradecanoate + CoA + H(+). The catalysed reaction is choloyl-CoA + taurine = taurocholate + CoA + H(+). The enzyme catalyses chenodeoxycholoyl-CoA + glycine = glycochenodeoxycholate + CoA + H(+). It carries out the reaction chenodeoxycholoyl-CoA + taurine = taurochenodeoxycholate + CoA + H(+). It catalyses the reaction eicosanoyl-CoA + glycine = N-eicosanoylglycinate + CoA + H(+). The catalysed reaction is hexacosanoyl-CoA + glycine = N-hexacosanoylglycine + CoA + H(+). The enzyme catalyses docosanoyl-CoA + glycine = N-docosanoylglycine + CoA + H(+). Functionally, catalyzes the amidation of bile acids (BAs) with the amino acid taurine. Selective for taurine conjugation of cholyl CoA and only taurine-conjugated BAs are found in bile. Amidation of BAs in the liver with taurine prior to their excretion into bile is an important biochemical event in bile acid metabolism. This conjugation (or amidation) plays several important biological roles in that it promotes the secretion of BAs and cholesterol into bile and increases the detergent properties of BAs in the intestine, which facilitates lipid and vitamin absorption. May also act as an acyl-CoA thioesterase that regulates intracellular levels of free fatty acids. In vitro, catalyzes the hydrolysis of long- and very long-chain saturated acyl-CoAs to the free fatty acid and coenzyme A (CoASH), and conjugates glycine to these acyl-CoAs. The sequence is that of Bile acid-CoA:amino acid N-acyltransferase (Baat) from Mus musculus (Mouse).